The primary structure comprises 249 residues: NADH dehydrogenase [ubiquinone] flavoprotein 2, mitochondrial (249 aa).

The N-terminal 32 residues, 1-32, are a transit peptide targeting the mitochondrion; the sequence is MFLSAALRARAAGLAAHWGKHIRNLHKTAVQN. Residue Lys61 is modified to N6-acetyllysine. Cys135, Cys140, Cys176, and Cys180 together coordinate [2Fe-2S] cluster. At Tyr193 the chain carries Phosphotyrosine; by SRC. Residues 213-249 form a disordered region; the sequence is IPKPGPRSGRFSCEPAGGLTSLTEPPKGPGFGVQAGL.

This sequence belongs to the complex I 24 kDa subunit family. Core subunit of respiratory chain NADH dehydrogenase (Complex I) which is composed of 45 different subunits. This is a component of the flavoprotein-sulfur (FP) fragment of the enzyme. The cofactor is [2Fe-2S] cluster.

The protein localises to the mitochondrion inner membrane. The catalysed reaction is a ubiquinone + NADH + 5 H(+)(in) = a ubiquinol + NAD(+) + 4 H(+)(out). Core subunit of the mitochondrial membrane respiratory chain NADH dehydrogenase (Complex I) which catalyzes electron transfer from NADH through the respiratory chain, using ubiquinone as an electron acceptor. Parts of the peripheral arm of the enzyme, where the electrons from NADH are accepted by flavin mononucleotide (FMN) and then passed along a chain of iron-sulfur clusters by electron tunnelling to the final acceptor ubiquinone. Contains one iron-sulfur cluster. This Bos taurus (Bovine) protein is NADH dehydrogenase [ubiquinone] flavoprotein 2, mitochondrial (NDUFV2).